The following is a 276-amino-acid chain: Shikimate dehydrogenase (NADP(+)) (276 aa).

Shikimate is bound by residues Ser19 to Ser21 and Thr66. Lys70 acts as the Proton acceptor in catalysis. An NADP(+)-binding site is contributed by Asp82. Positions 91 and 107 each coordinate shikimate. NADP(+)-binding positions include Gly133–Ala137, Asn157–Arg162, and Leu222. Tyr224 provides a ligand contact to shikimate. Gly245 is an NADP(+) binding site.

Belongs to the shikimate dehydrogenase family. In terms of assembly, homodimer.

The enzyme catalyses shikimate + NADP(+) = 3-dehydroshikimate + NADPH + H(+). Its pathway is metabolic intermediate biosynthesis; chorismate biosynthesis; chorismate from D-erythrose 4-phosphate and phosphoenolpyruvate: step 4/7. Involved in the biosynthesis of the chorismate, which leads to the biosynthesis of aromatic amino acids. Catalyzes the reversible NADPH linked reduction of 3-dehydroshikimate (DHSA) to yield shikimate (SA). The sequence is that of Shikimate dehydrogenase (NADP(+)) from Ruegeria sp. (strain TM1040) (Silicibacter sp.).